The primary structure comprises 560 residues: Formate--tetrahydrofolate ligase (560 aa).

69-76 (TPAGEGKS) lines the ATP pocket.

Belongs to the formate--tetrahydrofolate ligase family.

The catalysed reaction is (6S)-5,6,7,8-tetrahydrofolate + formate + ATP = (6R)-10-formyltetrahydrofolate + ADP + phosphate. It participates in one-carbon metabolism; tetrahydrofolate interconversion. The protein is Formate--tetrahydrofolate ligase of Listeria innocua serovar 6a (strain ATCC BAA-680 / CLIP 11262).